A 190-amino-acid polypeptide reads, in one-letter code: Potassium-transporting ATPase KdpC subunit (190 aa).

Residues 10 to 30 (TFLFLLLITGGVYPLLTTALG) traverse the membrane as a helical segment.

The protein belongs to the KdpC family. In terms of assembly, the system is composed of three essential subunits: KdpA, KdpB and KdpC.

The protein resides in the cell inner membrane. Its function is as follows. Part of the high-affinity ATP-driven potassium transport (or Kdp) system, which catalyzes the hydrolysis of ATP coupled with the electrogenic transport of potassium into the cytoplasm. This subunit acts as a catalytic chaperone that increases the ATP-binding affinity of the ATP-hydrolyzing subunit KdpB by the formation of a transient KdpB/KdpC/ATP ternary complex. The chain is Potassium-transporting ATPase KdpC subunit from Escherichia coli O81 (strain ED1a).